The following is a 492-amino-acid chain: Trypanothione reductase (492 aa).

35-52 (DVQTVHGPPFFAALGGTC) contacts FAD. Cysteine 52 and cysteine 57 are joined by a disulfide. Histidine 461 functions as the Proton acceptor in the catalytic mechanism.

It belongs to the class-I pyridine nucleotide-disulfide oxidoreductase family. As to quaternary structure, homodimer. FAD serves as cofactor.

The protein resides in the cytoplasm. The catalysed reaction is trypanothione + NADP(+) = trypanothione disulfide + NADPH + H(+). Its function is as follows. Trypanothione is the parasite analog of glutathione; this enzyme is the equivalent of glutathione reductase. In Trypanosoma congolense, this protein is Trypanothione reductase (TPR).